We begin with the raw amino-acid sequence, 42 residues long: Photosystem I reaction center subunit IX (42 aa).

A helical membrane pass occupies residues 8–28; sequence YLSTAPVIGVLWMTFTAGFII.

Belongs to the PsaJ family.

Its subcellular location is the plastid. It localises to the chloroplast thylakoid membrane. In terms of biological role, may help in the organization of the PsaE and PsaF subunits. This is Photosystem I reaction center subunit IX from Pyropia yezoensis (Susabi-nori).